The chain runs to 69 residues: Neurotoxin Cex3 (69 aa).

Residue A1 is a signal peptide. An LCN-type CS-alpha/beta domain is found at 2–67; sequence KDGYLVNKST…TYPLPNKSCG (66 aa). 4 disulfide bridges follow: C13-C66, C17-C42, C26-C47, and C30-C49. C66 carries the post-translational modification Cysteine amide. A propeptide spanning residues 67-69 is cleaved from the precursor; the sequence is GRK.

This sequence belongs to the long (4 C-C) scorpion toxin superfamily. Sodium channel inhibitor family. Beta subfamily. In terms of tissue distribution, expressed by the venom gland.

Its subcellular location is the secreted. Its function is as follows. Beta toxins bind voltage-independently at site-4 of sodium channels (Nav) and shift the voltage of activation toward more negative potentials thereby affecting sodium channel activation and promoting spontaneous and repetitive firing. In Centruroides exilicauda (Bark scorpion), this protein is Neurotoxin Cex3.